The chain runs to 945 residues: Sensor kinase CckA (945 aa).

The next 2 helical transmembrane spans lie at 111–131 (ALRL…YFLF) and 139–159 (FALV…FGAA). 3 consecutive PAS domains span residues 171–212 (HQDL…TDAD), 313–341 (LDHA…EWLG), and 432–505 (AEVR…FAGQ). The 224-residue stretch at 574 to 797 (GIAHDFNNVL…TFKIFLPRLI (224 aa)) folds into the Histidine kinase domain. Position 577 is a phosphohistidine; by autocatalysis (His577). Residues 825-941 (TVLLVEDEDA…QLATTVKEML (117 aa)) form the Response regulatory domain. 4-aspartylphosphate is present on Asp876.

It is found in the cell inner membrane. It catalyses the reaction ATP + protein L-histidine = ADP + protein N-phospho-L-histidine.. In terms of biological role, component of a regulatory phosphorelay system that controls B.abortus cell growth, division, and intracellular survival inside mammalian host cells. This signaling pathway is composed of CckA, ChpT, CtrA and CpdR. CckA autophosphorylates in the presence of ATP on a conserved His residue and transfers a phosphoryl group to a conserved Asp residue on its C-terminal receiver domain. CckA-P transfers phosphoryl groups to the ChpT phosphotransferase. This Brucella abortus (strain 2308) protein is Sensor kinase CckA.